The chain runs to 257 residues: MALAKRIIPCLDVTAGRVVKGVNFVELRDAGDPVEIARRYDDQGADELTFLDITATSDQRDLILPIIEAVASQVFIPLTVGGGVRAVEDVRRLLNAGADKISMNSSAVANPQLVKDATDKYGSQCIVVAIDAKRVSAEGEVPRWEVFTHGGRKATGLDAVEWARKMAELGAGEILLTSMDRDGTKSGFDLALTRAVSDAVPIPVIASGGVGNLQHLADGIKEGHADAVLAASIFHYGEHTVGEAKRFMADQGISVRL.

Catalysis depends on residues Asp-12 and Asp-131.

The protein belongs to the HisA/HisF family. In terms of assembly, heterodimer of HisH and HisF.

It is found in the cytoplasm. It catalyses the reaction 5-[(5-phospho-1-deoxy-D-ribulos-1-ylimino)methylamino]-1-(5-phospho-beta-D-ribosyl)imidazole-4-carboxamide + L-glutamine = D-erythro-1-(imidazol-4-yl)glycerol 3-phosphate + 5-amino-1-(5-phospho-beta-D-ribosyl)imidazole-4-carboxamide + L-glutamate + H(+). Its pathway is amino-acid biosynthesis; L-histidine biosynthesis; L-histidine from 5-phospho-alpha-D-ribose 1-diphosphate: step 5/9. IGPS catalyzes the conversion of PRFAR and glutamine to IGP, AICAR and glutamate. The HisF subunit catalyzes the cyclization activity that produces IGP and AICAR from PRFAR using the ammonia provided by the HisH subunit. The polypeptide is Imidazole glycerol phosphate synthase subunit HisF (Paraburkholderia xenovorans (strain LB400)).